Here is a 186-residue protein sequence, read N- to C-terminus: Probable GTP-binding protein EngB (186 aa).

The EngB-type G domain maps to 18–186; the sequence is DKKEICFIGR…LKKLIGSVIL (169 aa). Residues 26-33, 52-56, 69-72, 135-138, and 166-168 contribute to the GTP site; these read GRSNVGKS, GRTQL, DLPG, NKAD, and VSA. Mg(2+)-binding residues include Ser33 and Thr54.

It belongs to the TRAFAC class TrmE-Era-EngA-EngB-Septin-like GTPase superfamily. EngB GTPase family. It depends on Mg(2+) as a cofactor.

In terms of biological role, necessary for normal cell division and for the maintenance of normal septation. This chain is Probable GTP-binding protein EngB, found in Malacoplasma penetrans (strain HF-2) (Mycoplasma penetrans).